Reading from the N-terminus, the 625-residue chain is Mesothelin (625 aa).

The first 35 residues, 1 to 35 (MALPTARPLLGSCGSPICSRSFLLLLLSLGWIPRL), serve as a signal peptide directing secretion. An N-linked (GlcNAc...) asparagine glycan is attached at N93. The residue at position 202 (S202) is a Phosphoserine. C304 and C328 are joined by a disulfide. N390, N488, and N517 each carry an N-linked (GlcNAc...) asparagine glycan. The GPI-anchor amidated serine moiety is linked to residue S600. Residues 601–625 (SRASLLGPGFVLIWIPALLPALRLS) constitute a propeptide, removed in mature form.

This sequence belongs to the mesothelin family. In terms of assembly, interacts with MUC16. Proteolytically cleaved by a furin-like convertase to generate megakaryocyte-potentiating factor (MPF), and the cleaved form of mesothelin. Highly expressed in lung and heart. Expressed at low levels in spleen, liver, kidney and testis. Present in lung (at protein level).

Its subcellular location is the cell membrane. It localises to the golgi apparatus. The protein localises to the secreted. Membrane-anchored forms may play a role in cellular adhesion. Its function is as follows. Megakaryocyte-potentiating factor (MPF) may potentiate megakaryocyte colony formation. In Mus musculus (Mouse), this protein is Mesothelin (Msln).